Consider the following 276-residue polypeptide: Formamidopyrimidine-DNA glycosylase (276 aa).

P2 (schiff-base intermediate with DNA) is an active-site residue. E3 serves as the catalytic Proton donor. The active-site Proton donor; for beta-elimination activity is the K58. Positions 94, 112, and 157 each coordinate DNA. The FPG-type zinc finger occupies F242–R276. R266 serves as the catalytic Proton donor; for delta-elimination activity.

It belongs to the FPG family. As to quaternary structure, monomer. It depends on Zn(2+) as a cofactor.

It catalyses the reaction Hydrolysis of DNA containing ring-opened 7-methylguanine residues, releasing 2,6-diamino-4-hydroxy-5-(N-methyl)formamidopyrimidine.. The catalysed reaction is 2'-deoxyribonucleotide-(2'-deoxyribose 5'-phosphate)-2'-deoxyribonucleotide-DNA = a 3'-end 2'-deoxyribonucleotide-(2,3-dehydro-2,3-deoxyribose 5'-phosphate)-DNA + a 5'-end 5'-phospho-2'-deoxyribonucleoside-DNA + H(+). Functionally, involved in base excision repair of DNA damaged by oxidation or by mutagenic agents. Acts as a DNA glycosylase that recognizes and removes damaged bases. Has a preference for oxidized purines, such as 7,8-dihydro-8-oxoguanine (8-oxoG). Has AP (apurinic/apyrimidinic) lyase activity and introduces nicks in the DNA strand. Cleaves the DNA backbone by beta-delta elimination to generate a single-strand break at the site of the removed base with both 3'- and 5'-phosphates. The chain is Formamidopyrimidine-DNA glycosylase from Burkholderia thailandensis (strain ATCC 700388 / DSM 13276 / CCUG 48851 / CIP 106301 / E264).